The primary structure comprises 771 residues: Probable aconitate hydratase, mitochondrial (771 aa).

Substrate contacts are provided by residues glutamine 86 and 179 to 181; that span reads DSH. Cysteine 372, cysteine 435, and cysteine 438 together coordinate [4Fe-4S] cluster. Substrate is bound by residues arginine 461, arginine 466, arginine 594, and 657–658; that span reads SR.

Belongs to the aconitase/IPM isomerase family. In terms of assembly, monomer. It depends on [4Fe-4S] cluster as a cofactor.

The protein resides in the mitochondrion. The catalysed reaction is citrate = D-threo-isocitrate. It functions in the pathway carbohydrate metabolism; tricarboxylic acid cycle; isocitrate from oxaloacetate: step 2/2. Catalyzes the isomerization of citrate to isocitrate via cis-aconitate. The sequence is that of Probable aconitate hydratase, mitochondrial (aco2) from Dictyostelium discoideum (Social amoeba).